Reading from the N-terminus, the 196-residue chain is Aequorin-1 (196 aa).

A propeptide spanning residues 1 to 7 (MTSEQYS) is cleaved from the precursor. EF-hand domains follow at residues 18-53 (KWIG…IVIN), 54-108 (NLGA…SKNQ), 111-146 (LIRL…DGII), and 147-182 (QSSE…FWYT). Ca(2+) contacts are provided by D31, N33, N35, R37, and E42. May interact with the chromophore regions lie at residues 47–57 (ASDIVINNLGA), 62–72 (AKRHKDAVEAF), and 107–117 (NQITLIRLWGD). 9 residues coordinate Ca(2+): D124, D126, N128, E135, D160, D162, S164, Q166, and E171.

It belongs to the aequorin family. Post-translationally, the reduction of the disulfide bond is necessary to regenerate aequorin from apoaequorin.

Functionally, ca(2+)-dependent bioluminescence photoprotein. Displays an emission peak at 470 nm (blue light). Trace amounts of calcium ion trigger the intramolecular oxidation of the chromophore, coelenterazine into coelenteramide and CO(2) with the concomitant emission of light. The sequence is that of Aequorin-1 from Aequorea victoria (Water jellyfish).